The sequence spans 89 residues: Small ribosomal subunit protein uS15 (89 aa).

It belongs to the universal ribosomal protein uS15 family. Part of the 30S ribosomal subunit. Forms a bridge to the 50S subunit in the 70S ribosome, contacting the 23S rRNA.

Functionally, one of the primary rRNA binding proteins, it binds directly to 16S rRNA where it helps nucleate assembly of the platform of the 30S subunit by binding and bridging several RNA helices of the 16S rRNA. In terms of biological role, forms an intersubunit bridge (bridge B4) with the 23S rRNA of the 50S subunit in the ribosome. The polypeptide is Small ribosomal subunit protein uS15 (Pseudarthrobacter chlorophenolicus (strain ATCC 700700 / DSM 12829 / CIP 107037 / JCM 12360 / KCTC 9906 / NCIMB 13794 / A6) (Arthrobacter chlorophenolicus)).